The following is a 339-amino-acid chain: Nicotinate-nucleotide--dimethylbenzimidazole phosphoribosyltransferase (339 aa).

The Proton acceptor role is filled by glutamate 306.

Belongs to the CobT family.

The enzyme catalyses 5,6-dimethylbenzimidazole + nicotinate beta-D-ribonucleotide = alpha-ribazole 5'-phosphate + nicotinate + H(+). It participates in nucleoside biosynthesis; alpha-ribazole biosynthesis; alpha-ribazole from 5,6-dimethylbenzimidazole: step 1/2. Its function is as follows. Catalyzes the synthesis of alpha-ribazole-5'-phosphate from nicotinate mononucleotide (NAMN) and 5,6-dimethylbenzimidazole (DMB). This Brucella melitensis biotype 2 (strain ATCC 23457) protein is Nicotinate-nucleotide--dimethylbenzimidazole phosphoribosyltransferase.